A 356-amino-acid chain; its full sequence is tRNA-specific 2-thiouridylase MnmA (356 aa).

ATP is bound by residues G8 to S15 and M34. The Nucleophile role is filled by C103. C103 and C199 are disulfide-bonded. An ATP-binding site is contributed by G127. Residues K149–Q151 form an interaction with tRNA region. C199 serves as the catalytic Cysteine persulfide intermediate. Residues R305–Y306 are interaction with tRNA.

Belongs to the MnmA/TRMU family.

It is found in the cytoplasm. It carries out the reaction S-sulfanyl-L-cysteinyl-[protein] + uridine(34) in tRNA + AH2 + ATP = 2-thiouridine(34) in tRNA + L-cysteinyl-[protein] + A + AMP + diphosphate + H(+). In terms of biological role, catalyzes the 2-thiolation of uridine at the wobble position (U34) of tRNA, leading to the formation of s(2)U34. The sequence is that of tRNA-specific 2-thiouridylase MnmA from Clostridium kluyveri (strain ATCC 8527 / DSM 555 / NBRC 12016 / NCIMB 10680 / K1).